The sequence spans 207 residues: dTTP/UTP pyrophosphatase (207 aa).

Aspartate 79 functions as the Proton acceptor in the catalytic mechanism.

The protein belongs to the Maf family. YhdE subfamily. The cofactor is a divalent metal cation.

Its subcellular location is the cytoplasm. The catalysed reaction is dTTP + H2O = dTMP + diphosphate + H(+). It carries out the reaction UTP + H2O = UMP + diphosphate + H(+). Its function is as follows. Nucleoside triphosphate pyrophosphatase that hydrolyzes dTTP and UTP. May have a dual role in cell division arrest and in preventing the incorporation of modified nucleotides into cellular nucleic acids. The chain is dTTP/UTP pyrophosphatase from Rhodopseudomonas palustris (strain HaA2).